Consider the following 966-residue polypeptide: Glycine dehydrogenase (decarboxylating) (966 aa).

K713 bears the N6-(pyridoxal phosphate)lysine mark.

It belongs to the GcvP family. As to quaternary structure, the glycine cleavage system is composed of four proteins: P, T, L and H. The cofactor is pyridoxal 5'-phosphate.

It carries out the reaction N(6)-[(R)-lipoyl]-L-lysyl-[glycine-cleavage complex H protein] + glycine + H(+) = N(6)-[(R)-S(8)-aminomethyldihydrolipoyl]-L-lysyl-[glycine-cleavage complex H protein] + CO2. Its function is as follows. The glycine cleavage system catalyzes the degradation of glycine. The P protein binds the alpha-amino group of glycine through its pyridoxal phosphate cofactor; CO(2) is released and the remaining methylamine moiety is then transferred to the lipoamide cofactor of the H protein. The chain is Glycine dehydrogenase (decarboxylating) from Psychromonas ingrahamii (strain DSM 17664 / CCUG 51855 / 37).